A 195-amino-acid polypeptide reads, in one-letter code: Holliday junction branch migration complex subunit RuvA (195 aa).

The tract at residues 1–64 (MIASIRGVIQ…EDALTLYGFS (64 aa)) is domain I. Residues 65–139 (DNAQRSLFEQ…GKIDFRQLAA (75 aa)) form a domain II region. The tract at residues 139-143 (ASGST) is flexible linker. Positions 144–195 (SVSALDRELSEILVSLGYSAAEAAAAIASLPSDAPPTLEERLRLALRYFGSA) are domain III.

This sequence belongs to the RuvA family. In terms of assembly, homotetramer. Forms an RuvA(8)-RuvB(12)-Holliday junction (HJ) complex. HJ DNA is sandwiched between 2 RuvA tetramers; dsDNA enters through RuvA and exits via RuvB. An RuvB hexamer assembles on each DNA strand where it exits the tetramer. Each RuvB hexamer is contacted by two RuvA subunits (via domain III) on 2 adjacent RuvB subunits; this complex drives branch migration. In the full resolvosome a probable DNA-RuvA(4)-RuvB(12)-RuvC(2) complex forms which resolves the HJ.

Its subcellular location is the cytoplasm. Its function is as follows. The RuvA-RuvB-RuvC complex processes Holliday junction (HJ) DNA during genetic recombination and DNA repair, while the RuvA-RuvB complex plays an important role in the rescue of blocked DNA replication forks via replication fork reversal (RFR). RuvA specifically binds to HJ cruciform DNA, conferring on it an open structure. The RuvB hexamer acts as an ATP-dependent pump, pulling dsDNA into and through the RuvAB complex. HJ branch migration allows RuvC to scan DNA until it finds its consensus sequence, where it cleaves and resolves the cruciform DNA. This is Holliday junction branch migration complex subunit RuvA from Chloroflexus aggregans (strain MD-66 / DSM 9485).